A 286-amino-acid chain; its full sequence is Pantothenate synthetase (286 aa).

ATP is bound at residue 30–37 (MGYFHEGH). Histidine 37 acts as the Proton donor in catalysis. Position 61 (glutamine 61) interacts with (R)-pantoate. A beta-alanine-binding site is contributed by glutamine 61. ATP is bound at residue 147-150 (GKKD). Glutamine 153 provides a ligand contact to (R)-pantoate. 184-187 (MSSR) provides a ligand contact to ATP.

It belongs to the pantothenate synthetase family. Homodimer.

The protein localises to the cytoplasm. The catalysed reaction is (R)-pantoate + beta-alanine + ATP = (R)-pantothenate + AMP + diphosphate + H(+). It functions in the pathway cofactor biosynthesis; (R)-pantothenate biosynthesis; (R)-pantothenate from (R)-pantoate and beta-alanine: step 1/1. Catalyzes the condensation of pantoate with beta-alanine in an ATP-dependent reaction via a pantoyl-adenylate intermediate. The protein is Pantothenate synthetase of Syntrophus aciditrophicus (strain SB).